The chain runs to 335 residues: Homeobox protein unc-39 (335 aa).

2 disordered regions span residues 27–56 (FTSS…GGPP) and 269–294 (RRQR…NGGS). The span at 28–41 (TSSSNSNTSNSSTS) shows a compositional bias: low complexity. Polar residues predominate over residues 42–53 (PSHISDQFSSSG). The homeobox DNA-binding region spans 225-277 (KDSSRKFLKQFFRNVSEYPTQEQKREISRATGLKIVQISNWFKNRRQRDKSNN). The span at 276-294 (NNSAKCSPPSSSSSTNGGS) shows a compositional bias: low complexity.

The protein belongs to the SIX/Sine oculis homeobox family.

It localises to the nucleus. Its function is as follows. Probable transcription factor required for differentiation and migration of neuronal cells, such as RID and CAN neurons. Specifically, plays a role in the terminal differentiation of RID peptidergic neurons. Also required for CAN neuron axon guidance. The polypeptide is Homeobox protein unc-39 (Caenorhabditis elegans).